A 97-amino-acid polypeptide reads, in one-letter code: Large ribosomal subunit protein uL23 (97 aa).

The protein belongs to the universal ribosomal protein uL23 family. As to quaternary structure, part of the 50S ribosomal subunit. Contacts protein L29, and trigger factor when it is bound to the ribosome.

Its function is as follows. One of the early assembly proteins it binds 23S rRNA. One of the proteins that surrounds the polypeptide exit tunnel on the outside of the ribosome. Forms the main docking site for trigger factor binding to the ribosome. The polypeptide is Large ribosomal subunit protein uL23 (Brucella anthropi (strain ATCC 49188 / DSM 6882 / CCUG 24695 / JCM 21032 / LMG 3331 / NBRC 15819 / NCTC 12168 / Alc 37) (Ochrobactrum anthropi)).